The primary structure comprises 708 residues: MGMSKSYGCFGYPLSIFFIVVNEFCERFSYYGMRALLILYFRRFIGWDDNLSTAIYHTFVALCYLTPILGALIADSWLGKFKTIVSLSIVYTIGQAVTAVSSINDLTDYNKDGTPDNLSVHVALSMIGLALIALGTGGIKPCVSAFGGDQFEEGQEKQRNRFFSIFYLAINAGSLISTIVTPMLRVHECGIYSQKACYPLAFGVPAALMAVSLIVFVIGSGMYKKFQPQGNVMGKVVKCIGFALKNRFRHRSKQFPKREHWLDWAKEKYDERLISQIKMVTKVMFLYIPLPMFWALFDQQGSRWTLQATAMSGKIGLLEVQPDQMQTVNAILIVVMVPIMDAVVYPLIAKCGFNFTSLKRMTVGMFLASMAFVMAAIVQLEIDKTLPVFPKQNEVQIKVLNIGNGAMNVSFPGAVVTVSQMSQSDGFMTFDVDKLTSINISSTGSPVIPVTYNFEQGHRHTLLVWAPNNYRVVKDGLNQKPEKGENGIRFINSLNESLNITMGDKVYVNVTSHNASEYQFFSLGTKNITISSTQQISQNCTKVLQSSNLEFGSAYTYVIGTQSTGCPELHMFEDISPNTVNMALQIPQYFLITCGEVVFSVTGLEFSYSQAPSNMKSVLQAGWLLTVAVGNIIVLIVAGAGQFSEQWAEYILFAALLLVVCVIFAIMARFYTYVNPAEIEAQFDDDEKKNLEKMNVYSTVTPVSQTQM.

The helical transmembrane segment at 1–21 threads the bilayer; sequence MGMSKSYGCFGYPLSIFFIVV. Residues 22–53 are Extracellular-facing; the sequence is NEFCERFSYYGMRALLILYFRRFIGWDDNLST. N-linked (GlcNAc...) asparagine glycosylation occurs at Asn50. The chain crosses the membrane as a helical span at residues 54–74; that stretch reads AIYHTFVALCYLTPILGALIA. Residues 75–82 lie on the Cytoplasmic side of the membrane; sequence DSWLGKFK. The chain crosses the membrane as a helical span at residues 83–103; that stretch reads TIVSLSIVYTIGQAVTAVSSI. At 104–118 the chain is on the extracellular side; that stretch reads NDLTDYNKDGTPDNL. Asn117 carries an N-linked (GlcNAc...) asparagine glycan. The helical transmembrane segment at 119 to 139 threads the bilayer; sequence SVHVALSMIGLALIALGTGGI. Residues 140 to 161 are Cytoplasmic-facing; it reads KPCVSAFGGDQFEEGQEKQRNR. A helical transmembrane segment spans residues 162–182; sequence FFSIFYLAINAGSLISTIVTP. The Extracellular segment spans residues 183–198; sequence MLRVHECGIYSQKACY. Residues 199–219 traverse the membrane as a helical segment; that stretch reads PLAFGVPAALMAVSLIVFVIG. Residues 220 to 276 lie on the Cytoplasmic side of the membrane; that stretch reads SGMYKKFQPQGNVMGKVVKCIGFALKNRFRHRSKQFPKREHWLDWAKEKYDERLISQ. The helical transmembrane segment at 277 to 297 threads the bilayer; that stretch reads IKMVTKVMFLYIPLPMFWALF. Over 298-327 the chain is Extracellular; that stretch reads DQQGSRWTLQATAMSGKIGLLEVQPDQMQT. The chain crosses the membrane as a helical span at residues 328-348; it reads VNAILIVVMVPIMDAVVYPLI. Residues 349 to 361 are Cytoplasmic-facing; it reads AKCGFNFTSLKRM. The chain crosses the membrane as a helical span at residues 362-382; sequence TVGMFLASMAFVMAAIVQLEI. The Extracellular portion of the chain corresponds to 383 to 584; that stretch reads DKTLPVFPKQ…ISPNTVNMAL (202 aa). The segment at 383–585 is extracellular domain (ECD); that stretch reads DKTLPVFPKQ…SPNTVNMALQ (203 aa). Residues Asn408, Asn439, Asn495, Asn499, Asn509, Asn514, Asn527, and Asn539 are each glycosylated (N-linked (GlcNAc...) asparagine). A helical membrane pass occupies residues 585-605; that stretch reads QIPQYFLITCGEVVFSVTGLE. Over 606–619 the chain is Cytoplasmic; sequence FSYSQAPSNMKSVL. The helical transmembrane segment at 620–640 threads the bilayer; the sequence is QAGWLLTVAVGNIIVLIVAGA. At 641–645 the chain is on the extracellular side; it reads GQFSE. Residues 646–666 traverse the membrane as a helical segment; sequence QWAEYILFAALLLVVCVIFAI. At 667 to 708 the chain is on the cytoplasmic side; it reads MARFYTYVNPAEIEAQFDDDEKKNLEKMNVYSTVTPVSQTQM.

This sequence belongs to the major facilitator superfamily. Proton-dependent oligopeptide transporter (POT/PTR) (TC 2.A.17) family. Interacts (via extracellular domain region) with trypsin.

The protein localises to the apical cell membrane. It carries out the reaction a dipeptide(out) + H(+)(out) = a dipeptide(in) + H(+)(in). The catalysed reaction is an L-amino acid tripeptide(out) + H(+)(out) = an L-amino acid tripeptide(in) + H(+)(in). It catalyses the reaction L-alanyl-L-lysine(out) + H(+)(out) = L-alanyl-L-lysine(in) + H(+)(in). The enzyme catalyses L-alanyl-L-proline(out) + H(+)(out) = L-alanyl-L-proline(in) + H(+)(in). It carries out the reaction L-alanyl-L-valine(out) + H(+)(out) = L-alanyl-L-valine(in) + H(+)(in). The catalysed reaction is carnosine(out) + H(+)(out) = carnosine(in) + H(+)(in). It catalyses the reaction glycyl-L-glutamine(out) + H(+)(out) = glycyl-L-glutamine(in) + H(+)(in). The enzyme catalyses glycyl-L-leucine(out) + H(+)(out) = glycyl-L-leucine(in) + H(+)(in). It carries out the reaction glycyl-L-proline(out) + H(+)(out) = glycyl-L-proline(in) + H(+)(in). The catalysed reaction is glycyl-sarcosine(out) + H(+)(out) = glycyl-sarcosine(in) + H(+)(in). It catalyses the reaction L-leucyl-L-leucine(out) + H(+)(out) = L-leucyl-L-leucine(in) + H(+)(in). The enzyme catalyses L-leucyl-L-proline(out) + H(+)(out) = L-leucyl-L-proline(in) + H(+)(in). It carries out the reaction L-phenylalanyl-L-leucine(out) + H(+)(out) = L-phenylalanyl-L-leucine(in) + H(+)(in). The catalysed reaction is L-phenylalanyl-L-phenylalanine(out) + H(+)(out) = L-phenylalanyl-L-phenylalanine(in) + H(+)(in). It catalyses the reaction L-lysyl-glycine(out) + H(+)(out) = L-lysyl-glycine(in) + H(+)(in). The enzyme catalyses L-tyrosylglycine(out) + H(+)(out) = L-tyrosylglycine(in) + H(+)(in). It carries out the reaction L-alanyl-L-aspartate(out) + 2 H(+)(out) = L-alanyl-L-aspartate(in) + 2 H(+)(in). The catalysed reaction is L-aspartyl-glycine(out) + 2 H(+)(out) = L-aspartyl-glycine(in) + 2 H(+)(in). It catalyses the reaction glycyl-L-aspartate(out) + 2 H(+)(out) = glycyl-L-aspartate(in) + 2 H(+)(in). The enzyme catalyses glycyl-L-glutamate(out) + 2 H(+)(out) = glycyl-L-glutamate(in) + 2 H(+)(in). It carries out the reaction L-alanyl-L-leucyl-L-alanine(out) + H(+)(out) = L-alanyl-L-leucyl-L-alanine(in) + H(+)(in). The catalysed reaction is L-alanyl-L-prolylglycine(out) + H(+)(out) = L-alanyl-L-prolylglycine(in) + H(+)(in). It catalyses the reaction glycylglycyl-L-isoleucine(out) + H(+)(out) = glycylglycyl-L-isoleucine(in) + H(+)(in). The enzyme catalyses glycylglycyl-L-proline(out) + H(+)(out) = glycylglycyl-L-proline(in) + H(+)(in). It carries out the reaction L-methionyl-L-phenylalanyl-L-methionine(out) + H(+)(out) = L-methionyl-L-phenylalanyl-L-methionine(in) + H(+)(in). The catalysed reaction is N-acetyl-D-muramoyl-L-alanyl-D-isoglutamine(out) + 2 H(+)(out) = N-acetyl-D-muramoyl-L-alanyl-D-isoglutamine(in) + 2 H(+)(in). It catalyses the reaction N(alpha)-formyl-L-methionyl-L-leucyl-L-phenylalanine(out) + 2 H(+)(out) = N(alpha)-formyl-L-methionyl-L-leucyl-L-phenylalanine(in) + 2 H(+)(in). Electrogenic proton-coupled amino-acid transporter that transports oligopeptides of 2 to 4 amino acids with a preference for dipeptides. Transports neutral and monovalently charged peptides with a proton to peptide stoichiometry of 1:1 or 2:1. Primarily responsible for the absorption of dietary di- and tripeptides from the small intestinal lumen. Mediates transepithelial transport of muramyl and N-formylated bacterial dipeptides contributing to recognition of pathogenic bacteria by the mucosal immune system. This chain is Solute carrier family 15 member 1 (SLC15A1), found in Canis lupus familiaris (Dog).